The following is a 123-amino-acid chain: MPTIKQLIRNARQLIRNVTKSPTLGGCPQRRGTCTRVYTITPKKPNSALRKVARVRLTSGFEITAYIPGIGHNSQEHSVVLVRGGRVKDLPGVRYHIVRGTLDAVGVKDRQQGRSKYGVKKPK.

Belongs to the universal ribosomal protein uS12 family. In terms of assembly, part of the 30S ribosomal subunit.

It is found in the plastid. Its subcellular location is the chloroplast. With S4 and S5 plays an important role in translational accuracy. Located at the interface of the 30S and 50S subunits. The sequence is that of Small ribosomal subunit protein uS12cz/uS12cy (rps12-A) from Gossypium barbadense (Sea Island cotton).